We begin with the raw amino-acid sequence, 306 residues long: MKNNNRLKINLPGFELKNPIMPASGCFGFGKEFSELYDLSRLGAIIIKAATKNEKFGNPTPRVAETSSGMLNAIGLQNPGVDHIINHELKELEKYDVPIIANVAGDDIDDYVYVAKRISQAKNVVALELNISCPNVKNGGIQFGTDCNVAYNLTKKVKKVSSKPVYVKLSPNVSDIVGMAKAIEEAKADGLSLINTLIGMALDPKSGKPILANKTGGLSGPAIKPVAIRMIYQVSQAVNIPIIGMGGISNVQDVIDFISAGASAVAIGTANFINPYICVEIIDQLESKLDELNVNHIWDLKGRSYR.

FMN contacts are provided by residues Ser-24 and Lys-48–Ala-49. Residues Lys-48 and Asn-72–Leu-76 contribute to the substrate site. 2 residues coordinate FMN: Asn-102 and Asn-130. Position 130 (Asn-130) interacts with substrate. Residue Cys-133 is the Nucleophile of the active site. Positions 168 and 194 each coordinate FMN. Residue Asn-195–Thr-196 coordinates substrate. FMN is bound by residues Gly-220, Gly-246–Gly-247, and Gly-268–Thr-269.

It belongs to the dihydroorotate dehydrogenase family. Type 1 subfamily. As to quaternary structure, heterotetramer of 2 PyrK and 2 PyrD type B subunits. FMN serves as cofactor.

It is found in the cytoplasm. The enzyme catalyses (S)-dihydroorotate + NAD(+) = orotate + NADH + H(+). Its pathway is pyrimidine metabolism; UMP biosynthesis via de novo pathway; orotate from (S)-dihydroorotate (NAD(+) route): step 1/1. Functionally, catalyzes the conversion of dihydroorotate to orotate with NAD(+) as electron acceptor. The polypeptide is Dihydroorotate dehydrogenase B (NAD(+)), catalytic subunit (pyrD) (Malacoplasma penetrans (strain HF-2) (Mycoplasma penetrans)).